Consider the following 303-residue polypeptide: N-acetyl-D-glucosamine kinase (303 aa).

Residues 4–11 (GFDIGGTK) and 133–140 (GVGGGLIF) contribute to the ATP site. The Zn(2+) site is built by His-157, Cys-177, Cys-179, and Cys-184.

Belongs to the ROK (NagC/XylR) family. NagK subfamily.

The enzyme catalyses N-acetyl-D-glucosamine + ATP = N-acetyl-D-glucosamine 6-phosphate + ADP + H(+). The protein operates within cell wall biogenesis; peptidoglycan recycling. Catalyzes the phosphorylation of N-acetyl-D-glucosamine (GlcNAc) derived from cell-wall degradation, yielding GlcNAc-6-P. The sequence is that of N-acetyl-D-glucosamine kinase from Shigella boydii serotype 4 (strain Sb227).